A 139-amino-acid chain; its full sequence is Transcription antitermination protein NusB (139 aa).

This sequence belongs to the NusB family.

In terms of biological role, involved in transcription antitermination. Required for transcription of ribosomal RNA (rRNA) genes. Binds specifically to the boxA antiterminator sequence of the ribosomal RNA (rrn) operons. This Idiomarina loihiensis (strain ATCC BAA-735 / DSM 15497 / L2-TR) protein is Transcription antitermination protein NusB.